Reading from the N-terminus, the 245-residue chain is UPF0246 protein Ldb2075 (245 aa).

Belongs to the UPF0246 family.

This Lactobacillus delbrueckii subsp. bulgaricus (strain ATCC 11842 / DSM 20081 / BCRC 10696 / JCM 1002 / NBRC 13953 / NCIMB 11778 / NCTC 12712 / WDCM 00102 / Lb 14) protein is UPF0246 protein Ldb2075.